The sequence spans 686 residues: Methionine--tRNA ligase (686 aa).

Residues 15-25 carry the 'HIGH' region motif; that stretch reads PYANGPIHLGH. Positions 146, 149, 159, and 162 each coordinate Zn(2+). The 'KMSKS' region motif lies at 331–335; that stretch reads KMSKS. An ATP-binding site is contributed by lysine 334. The tRNA-binding domain occupies 584–686; sequence DFAKIDLRVA…AGVKAGSRVM (103 aa).

This sequence belongs to the class-I aminoacyl-tRNA synthetase family. MetG type 1 subfamily. Homodimer. It depends on Zn(2+) as a cofactor.

It localises to the cytoplasm. It carries out the reaction tRNA(Met) + L-methionine + ATP = L-methionyl-tRNA(Met) + AMP + diphosphate. Functionally, is required not only for elongation of protein synthesis but also for the initiation of all mRNA translation through initiator tRNA(fMet) aminoacylation. This Mannheimia succiniciproducens (strain KCTC 0769BP / MBEL55E) protein is Methionine--tRNA ligase.